The sequence spans 367 residues: Alanine racemase (367 aa).

K34 serves as the catalytic Proton acceptor; specific for D-alanine. K34 is subject to N6-(pyridoxal phosphate)lysine. R131 serves as a coordination point for substrate. Y258 functions as the Proton acceptor; specific for L-alanine in the catalytic mechanism. Residue M306 participates in substrate binding.

This sequence belongs to the alanine racemase family. Requires pyridoxal 5'-phosphate as cofactor.

It carries out the reaction L-alanine = D-alanine. It participates in amino-acid biosynthesis; D-alanine biosynthesis; D-alanine from L-alanine: step 1/1. Functionally, catalyzes the interconversion of L-alanine and D-alanine. May also act on other amino acids. The chain is Alanine racemase (alr) from Corynebacterium efficiens (strain DSM 44549 / YS-314 / AJ 12310 / JCM 11189 / NBRC 100395).